The sequence spans 967 residues: Isoleucine--tRNA ligase 2 (967 aa).

The short motif at Pro58–His68 is the 'HIGH' region element. Residues Glu430–Val463 are disordered. Glu598 contributes to the L-isoleucyl-5'-AMP binding site. A 'KMSKS' region motif is present at residues Lys639 to Ser643. Lys642 serves as a coordination point for ATP. Zn(2+) contacts are provided by Cys922, Cys925, Cys942, and Cys945.

Belongs to the class-I aminoacyl-tRNA synthetase family. IleS type 1 subfamily. Monomer. Zn(2+) is required as a cofactor.

The protein resides in the cytoplasm. The catalysed reaction is tRNA(Ile) + L-isoleucine + ATP = L-isoleucyl-tRNA(Ile) + AMP + diphosphate. Catalyzes the attachment of isoleucine to tRNA(Ile). As IleRS can inadvertently accommodate and process structurally similar amino acids such as valine, to avoid such errors it has two additional distinct tRNA(Ile)-dependent editing activities. One activity is designated as 'pretransfer' editing and involves the hydrolysis of activated Val-AMP. The other activity is designated 'posttransfer' editing and involves deacylation of mischarged Val-tRNA(Ile). In Burkholderia pseudomallei (strain K96243), this protein is Isoleucine--tRNA ligase 2.